We begin with the raw amino-acid sequence, 130 residues long: Large ribosomal subunit protein bL19 (130 aa).

Belongs to the bacterial ribosomal protein bL19 family.

Functionally, this protein is located at the 30S-50S ribosomal subunit interface and may play a role in the structure and function of the aminoacyl-tRNA binding site. In Gluconobacter oxydans (strain 621H) (Gluconobacter suboxydans), this protein is Large ribosomal subunit protein bL19.